The following is a 237-amino-acid chain: Probable S-methyl-5'-thioinosine phosphorylase (237 aa).

Phosphate-binding positions include threonine 12 and arginine 54 to histidine 55. A substrate-binding site is contributed by methionine 187. A phosphate-binding site is contributed by threonine 188. Substrate is bound at residue asparagine 211–alanine 213.

It belongs to the PNP/MTAP phosphorylase family. MTAP subfamily. In terms of assembly, homotrimer.

It carries out the reaction S-methyl-5'-thioinosine + phosphate = 5-(methylsulfanyl)-alpha-D-ribose 1-phosphate + hypoxanthine. Its pathway is purine metabolism; purine nucleoside salvage. Its function is as follows. Catalyzes the reversible phosphorylation of S-methyl-5'-thioinosine (MTI) to hypoxanthine and 5-methylthioribose-1-phosphate. Involved in the breakdown of S-methyl-5'-thioadenosine (MTA), a major by-product of polyamine biosynthesis. Catabolism of (MTA) occurs via deamination to MTI and phosphorolysis to hypoxanthine. In Xylella fastidiosa (strain 9a5c), this protein is Probable S-methyl-5'-thioinosine phosphorylase.